The primary structure comprises 359 residues: Histidinol-phosphate aminotransferase (359 aa).

An N6-(pyridoxal phosphate)lysine modification is found at K217.

It belongs to the class-II pyridoxal-phosphate-dependent aminotransferase family. Histidinol-phosphate aminotransferase subfamily. In terms of assembly, homodimer. It depends on pyridoxal 5'-phosphate as a cofactor.

It catalyses the reaction L-histidinol phosphate + 2-oxoglutarate = 3-(imidazol-4-yl)-2-oxopropyl phosphate + L-glutamate. It functions in the pathway amino-acid biosynthesis; L-histidine biosynthesis; L-histidine from 5-phospho-alpha-D-ribose 1-diphosphate: step 7/9. This Citrobacter koseri (strain ATCC BAA-895 / CDC 4225-83 / SGSC4696) protein is Histidinol-phosphate aminotransferase.